A 382-amino-acid polypeptide reads, in one-letter code: Putative acetyl-CoA C-acetyltransferase VraB (382 aa).

Residue cysteine 86 is the Acyl-thioester intermediate of the active site. The active-site Proton acceptor is histidine 338.

Belongs to the thiolase-like superfamily. Thiolase family.

The polypeptide is Putative acetyl-CoA C-acetyltransferase VraB (vraB) (Staphylococcus epidermidis (strain ATCC 12228 / FDA PCI 1200)).